Reading from the N-terminus, the 275-residue chain is 3-methyl-2-oxobutanoate hydroxymethyltransferase (275 aa).

Residues aspartate 44 and aspartate 83 each contribute to the Mg(2+) site. Residues aspartate 44–serine 45, aspartate 83, and lysine 113 contribute to the 3-methyl-2-oxobutanoate site. Mg(2+) is bound at residue glutamate 115. Glutamate 182 functions as the Proton acceptor in the catalytic mechanism.

This sequence belongs to the PanB family. Homodecamer; pentamer of dimers. Requires Mg(2+) as cofactor.

The protein localises to the cytoplasm. The enzyme catalyses 3-methyl-2-oxobutanoate + (6R)-5,10-methylene-5,6,7,8-tetrahydrofolate + H2O = 2-dehydropantoate + (6S)-5,6,7,8-tetrahydrofolate. Its pathway is cofactor biosynthesis; (R)-pantothenate biosynthesis; (R)-pantoate from 3-methyl-2-oxobutanoate: step 1/2. Functionally, catalyzes the reversible reaction in which hydroxymethyl group from 5,10-methylenetetrahydrofolate is transferred onto alpha-ketoisovalerate to form ketopantoate. The chain is 3-methyl-2-oxobutanoate hydroxymethyltransferase from Clostridium botulinum (strain 657 / Type Ba4).